A 308-amino-acid polypeptide reads, in one-letter code: Zinc finger protein unc-98 (308 aa).

2 consecutive C2H2-type zinc fingers follow at residues 111–133 (YKCRFCGLTFNFMNTLRAHERIH) and 139–161 (YVCGKCGESYEFACQLEYHAAQH). Residues 166–186 (GFKCDCGRTFFSYTEMLYHKH) form a C2H2-type 3; degenerate zinc finger. The C2H2-type 4 zinc finger occupies 244–266 (YICEYCSKSYSDSRGLAYHMYSH).

It localises to the nucleus. Its subcellular location is the cytoplasm. In terms of biological role, probable transcription factor. Required for muscle structure. Its dual subcellular localization suggests that it may function both as a muscle adhesion complex protein and as a transcription factor, or work together with transcription factors, to influence gene expression. Thought to act as a molecular bridge between unc-97 and mhc-a at the M-line of muscles, possibly in a signaling role. This Caenorhabditis briggsae protein is Zinc finger protein unc-98.